The chain runs to 337 residues: Ketol-acid reductoisomerase (NAD(P)(+)) (337 aa).

The KARI N-terminal Rossmann domain occupies Ala-2–Thr-187. Residues Phe-25–Gln-28, Arg-48, and Asp-88–Gln-91 each bind NADP(+). The active site involves His-113. Gly-139 is an NADP(+) binding site. One can recognise a KARI C-terminal knotted domain in the interval Ser-188–Leu-333. Asp-196, Glu-200, Glu-232, and Glu-236 together coordinate Mg(2+). Residue Ser-257 coordinates substrate.

This sequence belongs to the ketol-acid reductoisomerase family. It depends on Mg(2+) as a cofactor.

The catalysed reaction is (2R)-2,3-dihydroxy-3-methylbutanoate + NAD(+) = (2S)-2-acetolactate + NADH + H(+). The enzyme catalyses (2R)-2,3-dihydroxy-3-methylbutanoate + NADP(+) = (2S)-2-acetolactate + NADPH + H(+). The protein operates within amino-acid biosynthesis; L-isoleucine biosynthesis; L-isoleucine from 2-oxobutanoate: step 2/4. It functions in the pathway amino-acid biosynthesis; L-valine biosynthesis; L-valine from pyruvate: step 2/4. Its function is as follows. Involved in the biosynthesis of branched-chain amino acids (BCAA). Catalyzes an alkyl-migration followed by a ketol-acid reduction of (S)-2-acetolactate (S2AL) to yield (R)-2,3-dihydroxy-isovalerate. In the isomerase reaction, S2AL is rearranged via a Mg-dependent methyl migration to produce 3-hydroxy-3-methyl-2-ketobutyrate (HMKB). In the reductase reaction, this 2-ketoacid undergoes a metal-dependent reduction by NADPH or NADH to yield (R)-2,3-dihydroxy-isovalerate. The chain is Ketol-acid reductoisomerase (NAD(P)(+)) from Syntrophomonas wolfei subsp. wolfei (strain DSM 2245B / Goettingen).